A 462-amino-acid chain; its full sequence is Glycogen synthase 1 (462 aa).

R6 serves as a coordination point for ADP-alpha-D-glucose.

This sequence belongs to the glycosyltransferase 1 family. Bacterial/plant glycogen synthase subfamily.

It catalyses the reaction [(1-&gt;4)-alpha-D-glucosyl](n) + ADP-alpha-D-glucose = [(1-&gt;4)-alpha-D-glucosyl](n+1) + ADP + H(+). It functions in the pathway glycan biosynthesis; glycogen biosynthesis. Synthesizes alpha-1,4-glucan chains using ADP-glucose. In Bradyrhizobium diazoefficiens (strain JCM 10833 / BCRC 13528 / IAM 13628 / NBRC 14792 / USDA 110), this protein is Glycogen synthase 1.